The following is a 47-amino-acid chain: PhoP/PhoQ regulator MgrB (47 aa).

A helical membrane pass occupies residues 6-26; it reads WVVLGIVVVVCLLLWAQVFNI.

This sequence belongs to the MgrB family. As to quaternary structure, may form homooligomers. Probably interacts with the periplasmic domain of PhoQ.

It localises to the cell inner membrane. Functionally, phoP-regulated transcription is redox-sensitive, being activated when the periplasm becomes more reducing. MgrB acts between DsbA/DsbB and PhoP/PhoQ in this pathway. Represses PhoP/PhoQ signaling, possibly by binding to the periplasmic domain of PhoQ, altering its activity and that of downstream effector PhoP. This is PhoP/PhoQ regulator MgrB from Salmonella gallinarum (strain 287/91 / NCTC 13346).